A 537-amino-acid polypeptide reads, in one-letter code: uncharacterized protein (537 aa).

Transmembrane regions (helical) follow at residues 5–25, 40–60, 63–83, 115–135, 149–169, and 197–217; these read IGLG…PWFV, LAVA…FFGW, VLWV…MAVV, GLYY…HLEG, VYLL…WVTL, and VGIV…ALVI.

The protein resides in the plastid. Its subcellular location is the chloroplast membrane. This is an uncharacterized protein from Ostreococcus tauri.